The chain runs to 36 residues: Glucagon-1 (36 aa).

Belongs to the glucagon family.

The protein resides in the secreted. Functionally, promotes hydrolysis of glycogen and lipids, and raises the blood sugar level. This is Glucagon-1 (gcg1) from Oreochromis niloticus (Nile tilapia).